The following is a 289-amino-acid chain: 4-diphosphocytidyl-2-C-methyl-D-erythritol kinase (289 aa).

Residue K16 is part of the active site. 99-109 (PMGGGIGGGSS) is an ATP binding site. D141 is a catalytic residue.

This sequence belongs to the GHMP kinase family. IspE subfamily.

The catalysed reaction is 4-CDP-2-C-methyl-D-erythritol + ATP = 4-CDP-2-C-methyl-D-erythritol 2-phosphate + ADP + H(+). Its pathway is isoprenoid biosynthesis; isopentenyl diphosphate biosynthesis via DXP pathway; isopentenyl diphosphate from 1-deoxy-D-xylulose 5-phosphate: step 3/6. Catalyzes the phosphorylation of the position 2 hydroxy group of 4-diphosphocytidyl-2C-methyl-D-erythritol. This Ralstonia nicotianae (strain ATCC BAA-1114 / GMI1000) (Ralstonia solanacearum) protein is 4-diphosphocytidyl-2-C-methyl-D-erythritol kinase.